A 638-amino-acid polypeptide reads, in one-letter code: Growth hormone receptor (638 aa).

The N-terminal stretch at 1–18 (MDLWQLLLTVALAGSSDA) is a signal peptide. Residues 19–264 (FSGSEATPAT…SPFTCEEDFR (246 aa)) are Extracellular-facing. The segment at 30–51 (GRASESVQRVHPGLGTNSSGKP) is disordered. Asparagine 46 is a glycosylation site (N-linked (GlcNAc...) asparagine). Intrachain disulfides connect cysteine 56-cysteine 66 and cysteine 101-cysteine 112. Asparagine 115 carries an N-linked (GlcNAc...) asparagine glycan. Residues cysteine 126 and cysteine 140 are joined by a disulfide bond. Positions 151 to 254 (PPIGLNWTLL…EVLYVTLPQM (104 aa)) constitute a Fibronectin type-III domain. 3 N-linked (GlcNAc...) asparagine glycosylation sites follow: asparagine 156, asparagine 161, and asparagine 200. Positions 240 to 244 (YGEFS) match the WSXWS motif motif. The required for ADAM17-mediated proteolysis stretch occupies residues 260–262 (EED). The helical transmembrane segment at 265–288 (FPWFLIIIFGIFGLTVMLFVFIFS) threads the bilayer. At 289-638 (KQQRIKMLIL…STDQLNKILP (350 aa)) the chain is on the cytoplasmic side. The interval 294–379 (KMLILPPVPV…HQKSLSVLAA (86 aa)) is required for JAK2 binding. Positions 297–305 (ILPPVPVPK) match the Box 1 motif motif. A UbE motif motif is present at residues 340-349 (DSWVEFIELD). At serine 341 the chain carries Phosphoserine. Tyrosine 487 carries the post-translational modification Phosphotyrosine. The disordered stretch occupies residues 573-592 (TTTAERSGTAEDAPGSEMPV). Tyrosine 595 is subject to Phosphotyrosine.

It belongs to the type I cytokine receptor family. Type 1 subfamily. As to quaternary structure, on growth hormone (GH) binding, forms homodimers and binds JAK2 via a box 1-containing domain. The soluble form (GHBP) is produced by phorbol ester-promoted proteolytic cleavage at the cell surface (shedding) by ADAM17/TACE. Shedding is inhibited by growth hormone (GH) binding to the receptor probably due to a conformational change in GHR rendering the receptor inaccessible to ADAM17. Post-translationally, on GH binding, phosphorylated on tyrosine residues in the cytoplasmic domain by JAK2. In terms of processing, ubiquitinated by the ECS(SOCS2) complex following ligand-binding and phosphorylation by JAK2, leading to its degradation by the proteasome. Regulation by the ECS(SOCS2) complex acts as a negative feedback loop of growth hormone receptor signaling. Ubiquitination is not sufficient for GHR internalization.

The protein resides in the cell membrane. It is found in the secreted. Functionally, receptor for pituitary gland growth hormone involved in regulating postnatal body growth. On ligand binding, couples to, and activates the JAK2/STAT5 pathway. The soluble form acts as a reservoir of growth hormone in plasma and may be a modulator/inhibitor of GH signaling. The chain is Growth hormone receptor from Oryctolagus cuniculus (Rabbit).